A 178-amino-acid chain; its full sequence is 2-C-methyl-D-erythritol 2,4-cyclodiphosphate synthase (178 aa).

Positions 24, 26, and 61 each coordinate a divalent metal cation. Residue 24 to 26 (DSH) coordinates 4-CDP-2-C-methyl-D-erythritol 2-phosphate. 150–153 (TSGE) is a 4-CDP-2-C-methyl-D-erythritol 2-phosphate binding site.

Belongs to the IspF family. In terms of assembly, homotrimer. A divalent metal cation is required as a cofactor.

The catalysed reaction is 4-CDP-2-C-methyl-D-erythritol 2-phosphate = 2-C-methyl-D-erythritol 2,4-cyclic diphosphate + CMP. The protein operates within isoprenoid biosynthesis; isopentenyl diphosphate biosynthesis via DXP pathway; isopentenyl diphosphate from 1-deoxy-D-xylulose 5-phosphate: step 4/6. Its function is as follows. Involved in the biosynthesis of isopentenyl diphosphate (IPP) and dimethylallyl diphosphate (DMAPP), two major building blocks of isoprenoid compounds. Catalyzes the conversion of 4-diphosphocytidyl-2-C-methyl-D-erythritol 2-phosphate (CDP-ME2P) to 2-C-methyl-D-erythritol 2,4-cyclodiphosphate (ME-CPP) with a corresponding release of cytidine 5-monophosphate (CMP). The sequence is that of 2-C-methyl-D-erythritol 2,4-cyclodiphosphate synthase from Chlamydia trachomatis serovar A (strain ATCC VR-571B / DSM 19440 / HAR-13).